Reading from the N-terminus, the 229-residue chain is Ras-like protein rasV (229 aa).

40 to 47 (GDGGVGKT) is a GTP binding site. The short motif at 62–70 (YDPTIEDSY) is the Effector region element. GTP contacts are provided by residues 87–91 (DTAGQ) and 146–149 (NKSD). Cysteine methyl ester is present on Cys-226. Cys-226 is lipidated: S-geranylgeranyl cysteine. Residues 227-229 (KVM) constitute a propeptide, removed in mature form.

The protein belongs to the small GTPase superfamily. Ras family.

The protein localises to the cell membrane. It carries out the reaction GTP + H2O = GDP + phosphate + H(+). In terms of biological role, ras proteins bind GDP/GTP and possess intrinsic GTPase activity. This chain is Ras-like protein rasV (rasV), found in Dictyostelium discoideum (Social amoeba).